The chain runs to 344 residues: 2,3,4,5-tetrahydropyridine-2,6-dicarboxylate N-succinyltransferase (344 aa).

Glu205 is a Mg(2+) binding site. Glu221 serves as the catalytic Acyl-anhydride intermediate. Residues Arg223, Gly238, Ser241, Ala264, 279–280 (EA), Gly287, Lys304, and 317–320 (RRNS) each bind succinyl-CoA.

Belongs to the type 2 tetrahydrodipicolinate N-succinyltransferase family. As to quaternary structure, homotrimer.

It localises to the cytoplasm. It catalyses the reaction (S)-2,3,4,5-tetrahydrodipicolinate + succinyl-CoA + H2O = (S)-2-succinylamino-6-oxoheptanedioate + CoA. It participates in amino-acid biosynthesis; L-lysine biosynthesis via DAP pathway; LL-2,6-diaminopimelate from (S)-tetrahydrodipicolinate (succinylase route): step 1/3. Catalyzes the conversion of the cyclic tetrahydrodipicolinate (THDP) into the acyclic N-succinyl-L-2-amino-6-oxopimelate using succinyl-CoA. The polypeptide is 2,3,4,5-tetrahydropyridine-2,6-dicarboxylate N-succinyltransferase (Pseudomonas putida (strain ATCC 47054 / DSM 6125 / CFBP 8728 / NCIMB 11950 / KT2440)).